A 306-amino-acid chain; its full sequence is OVARIAN TUMOR DOMAIN-containing deubiquitinating enzyme 1 (306 aa).

An OTU domain is found at 81 to 295; that stretch reads IGIRRTRGDG…PGHYDILYPK (215 aa). D89 is a catalytic residue. C92 acts as the Nucleophile in catalysis. Active-site residues include H259 and H288.

The protein belongs to the peptidase C65 family.

The catalysed reaction is Thiol-dependent hydrolysis of ester, thioester, amide, peptide and isopeptide bonds formed by the C-terminal Gly of ubiquitin (a 76-residue protein attached to proteins as an intracellular targeting signal).. Cleavage activities for 'Lys-48'- and 'Lys-63'-linked ubiquitin (UB) tetramers is inhibited by UB aldehyde and N-ethylmaleimide but not by the metalloprotease inhibitors 1,10-phenanthroline and EDTA, and the serine protease inhibitor phenylmethylsulfonyl fluoride. Functionally, hydrolase that can remove conjugated ubiquitin from proteins in vitro and may therefore play an important regulatory role at the level of protein turnover by preventing degradation. Cysteine protease with a preference for Met-1 and 'Lys-48' over 'Lys-63'-linked ubiquitin (UB) tetramers (e.g. Ub2, Ub3 and Ub4) as substrates. This chain is OVARIAN TUMOR DOMAIN-containing deubiquitinating enzyme 1, found in Arabidopsis thaliana (Mouse-ear cress).